A 1517-amino-acid polypeptide reads, in one-letter code: MSKFKPIEIKEDGRPRDFEAFQLRLASPEKIKSWSYGEVKKPETINYRTLKPERDGLFCAKIFGPVRDYECLCGKYKKMRFKGIKCEKCGVEVTTSKVRRSRMGHIELVTPVAHIWYVNSLPSRIGTLLGVKMKDLERVLYYEAYIVENPGDAYYDNENSKKVEFCDVLNEEQYLNLMQRYESSGFKARMGGEVVRDLLANLDLVALLNQLKEDIASTNSEAKKKTIIKRLKVVENFLNSNLNSNTNIDEVVPNRPEWMMITNLPVLPPDLRPLVALDGGKFAVSDVNDLYRRVINRNTRLKRLMELDAPEIIIRNEKRMLQEAVDALFDNGRRANAVKGANKRPLKSLSEIIKGKQGRFRQNLLGKRVDFSGRSVIVVGPKLRMDQCGLPKKMALELFKPHLLAKLEEKGYATTVKQAKKMIENKTNEVWECLEEVVKGHPVMLNRAPTLHKLSIQAFHPVLVEGKAIQLHPLVCAAFNADFDGDQMAVHVPLSQEAIAECKVLMLSSMNILLPASGRSVTVPSQDMVLGIYYLSLEKDGAKGEHKICTGIEEVMIALEAKSLDIHASIRSVVDGRKITTTAGRLIIKSILPDFVPENMWNKVMKKKDIAALVDYVYKEGGLEVSASFLDKLKDLGFEYATKAGISISIADIIVPDQKQKNIDEAKKQVREIQNSYNLGLITSGERYNKIIDIWKSTNNILSKDMMELIKKDKEGFNSIYMMADSGARGSAAQISQLAAMRGLMAKPDGSIIETPIISNFREGLNVLEYFISTHGARKGLADTALKTANAGYLTRKLIDVAQNVKVTVDDCGAHEGVEINEITADGVVIETLEERILGRVLAENIIDSITNEILFSEGTLIDEEKARVIVESGVKSVSIRTPITCKAKKGVCSKCYGINLGEGKLVKPGEAVGIISAQSIGEPGTQLTLRTFHSGGTASTDLQDRQVVAHKEGFVRFYNLNTYEDRQGKTIVANHRNAAILLVEPKIKAPFKGTIHIEHAYEDVVVSVKAKNNEAKFILRKYDLAKANELAGVSGNIEGKLYIPYSDGVEVAENESIVEVIKEGWNIPNRIPYASELLVKDGDPITQDIIAGAKGTLKFYMLKGDGLDRIKNLKKGDVVKEKGVFVVIADENDREAKRHYIPRESVIEFDDSAFVDNPKAIIAKSSKEDKTIIAEWDAYNNTVIAEVAGTINFEDIESGYSADEQIDEATGKRSLVINEYLPSGVRPAILILGEKGKMVRYQLEPKTVIYVNDGDKVKQADILAKTPKAATKSKDITGGLPRVSELFEARKPKNTAVIAEIDGVVRFDKPLRSKERIIIQAEDGSSAEYLIDKSKRIQVRDGEFIHAGEKLTDGVISSHDVLRILGEKALHYYLISEIQQVYRGQGVVISDKHIEIIVSQMLRQVKIVDSGHTNFIVGDLVSRRKFREENERILKYGGEPAVAEPVLLGVTRAAIGSDSVISAASFQETTKVLTEASIAGKFDYLEDLKENVILGRMIPVGTGLYSEQNIKLKQQN.

Zn(2+) is bound by residues C71, C73, C86, and C89. Mg(2+) is bound by residues D482, D484, and D486. 4 residues coordinate Zn(2+): C812, C886, C893, and C896.

It belongs to the RNA polymerase beta' chain family. As to quaternary structure, the RNAP catalytic core consists of 2 alpha, 1 beta, 1 beta' and 1 omega subunit. When a sigma factor is associated with the core the holoenzyme is formed, which can initiate transcription. Mg(2+) serves as cofactor. The cofactor is Zn(2+).

The catalysed reaction is RNA(n) + a ribonucleoside 5'-triphosphate = RNA(n+1) + diphosphate. Its function is as follows. DNA-dependent RNA polymerase catalyzes the transcription of DNA into RNA using the four ribonucleoside triphosphates as substrates. The chain is DNA-directed RNA polymerase subunit beta' from Campylobacter lari (strain RM2100 / D67 / ATCC BAA-1060).